The sequence spans 310 residues: Alpha/beta hydrolase domain-containing protein 17A (310 aa).

Catalysis depends on charge relay system residues Ser190, Asp255, and His284. Ser307 carries the phosphoserine modification.

Belongs to the AB hydrolase superfamily. ABHD17 family. Palmitoylated on cysteine residues located in a cysteine cluster at the N-terminus which promotes membrane localization. Palmitoylation is required for post-synaptic localization and for depalmitoylating activity towards DLG4/PSD95.

The protein localises to the cell membrane. It localises to the endosome membrane. The protein resides in the cell projection. Its subcellular location is the dendritic spine. It is found in the postsynaptic density membrane. The catalysed reaction is S-hexadecanoyl-L-cysteinyl-[protein] + H2O = L-cysteinyl-[protein] + hexadecanoate + H(+). Its activity is regulated as follows. Inhibited by palmostatin-B. Functionally, hydrolyzes fatty acids from S-acylated cysteine residues in proteins. Has depalmitoylating activity towards NRAS. Has depalmitoylating activity towards DLG4/PSD95. May have depalmitoylating activity towards MAP6. The polypeptide is Alpha/beta hydrolase domain-containing protein 17A (Homo sapiens (Human)).